A 352-amino-acid polypeptide reads, in one-letter code: 4-hydroxy-3-methylbut-2-en-1-yl diphosphate synthase (flavodoxin) (352 aa).

Positions 262, 265, 297, and 304 each coordinate [4Fe-4S] cluster.

The protein belongs to the IspG family. [4Fe-4S] cluster serves as cofactor.

It catalyses the reaction (2E)-4-hydroxy-3-methylbut-2-enyl diphosphate + oxidized [flavodoxin] + H2O + 2 H(+) = 2-C-methyl-D-erythritol 2,4-cyclic diphosphate + reduced [flavodoxin]. Its pathway is isoprenoid biosynthesis; isopentenyl diphosphate biosynthesis via DXP pathway; isopentenyl diphosphate from 1-deoxy-D-xylulose 5-phosphate: step 5/6. Converts 2C-methyl-D-erythritol 2,4-cyclodiphosphate (ME-2,4cPP) into 1-hydroxy-2-methyl-2-(E)-butenyl 4-diphosphate. The polypeptide is 4-hydroxy-3-methylbut-2-en-1-yl diphosphate synthase (flavodoxin) (Campylobacter curvus (strain 525.92)).